Consider the following 368-residue polypeptide: tRNA-specific 2-thiouridylase MnmA (368 aa).

ATP is bound by residues 10–17 (AMSGGVDS) and Met-36. Cys-108 acts as the Nucleophile in catalysis. Residues Cys-108 and Cys-206 are joined by a disulfide bond. Gly-132 serves as a coordination point for ATP. The tract at residues 156–158 (KDQ) is interaction with tRNA. Catalysis depends on Cys-206, which acts as the Cysteine persulfide intermediate. Residues 312 to 313 (RY) are interaction with tRNA.

The protein belongs to the MnmA/TRMU family.

It is found in the cytoplasm. The catalysed reaction is S-sulfanyl-L-cysteinyl-[protein] + uridine(34) in tRNA + AH2 + ATP = 2-thiouridine(34) in tRNA + L-cysteinyl-[protein] + A + AMP + diphosphate + H(+). Functionally, catalyzes the 2-thiolation of uridine at the wobble position (U34) of tRNA, leading to the formation of s(2)U34. The polypeptide is tRNA-specific 2-thiouridylase MnmA (Natranaerobius thermophilus (strain ATCC BAA-1301 / DSM 18059 / JW/NM-WN-LF)).